Here is a 342-residue protein sequence, read N- to C-terminus: Transcription initiation factor TFIID subunit 12 (342 aa).

The segment at 1-221 (MKMEEFSPPT…QAPPPQMIPA (221 aa)) is disordered. Positions 12-35 (PNNHVIVQANPQIAAALSTNSPMQ) are enriched in polar residues. Low complexity-rich tracts occupy residues 39–59 (PPQG…VGQP), 67–89 (PMRM…QMRA), 96–146 (QQQQ…HLMG), and 180–192 (QQIM…QQHQ). A compositionally biased stretch (pro residues) spans 193-218 (QPPPSQQIQQPPIPQPQQQQAPPPQM). The Histone-fold domain occupies 230–297 (EKSKLDDLMQ…EFILKNVYNM (68 aa)).

Belongs to the TAF12 family. As to quaternary structure, interacts (via histone-fold domain) with taf-4 (via the histone-fold domain). Interaction may facilitate the nuclear localization of taf-4.

It localises to the nucleus. In terms of biological role, part of the general transcription factor complex TFIID. Plays a role in recruiting taf-4 to the nucleus and thereby activating transcription initiation by RNA polymerase II, as part of the TFIID complex. In Caenorhabditis elegans, this protein is Transcription initiation factor TFIID subunit 12.